We begin with the raw amino-acid sequence, 741 residues long: MQKKRVGKSVVAALAIIAMSAGTVAAWADGAPRTNDFWWPERLDLSPLRQHDVESNPYGKDFDYAQAFNKLDIEAVKKDIRATLTTSQDWWPADYGNYGPFFIRMAWHGAGTYRTYDGRGGAGGAQQRFEPLNSWPDNANLDKARRLLWPIKKKYGENISWGDLMVLTGNVALESMGFQTFGFGGGREDDWQSDLVYWGAGTKFMSNNRDKNGKLEKPLAATQMGLIYVNPEGPNGNPDPVAAAKDIRDAFGRMAMNDEETLALIAGGHTFGKAHGAASPDKCVGAAPAGAGVEAQGLGWANKCGTGKGADTITSGLEGAWSVDPVHFTMQYLDNLLEHDWVLTKSPAGAHQWMPKDAQDIVPDAHDPSKRHPLMMFTTDIALKVDPAYSAIAKRFHAHPEEFKLAFAKAWFKLTHRDLGPKARYLGKDVPKVDLIWQDPLPVAGYQMIGDADIAELKRRILASGVPKAELIKTAWASAASFRATDYRGGANGARIRLAPENDWAVNDPASLSKVLKSLEGIQSGFNRNRTDGKQVSLADLIVLGGSAAVEDAARKAGYDVKVPFSPGRVDATQAQTDVASFAVLEPTADGFRNYYQKSNERSPAELMVDRASKLDLTVPEMTVLVGGLRALDANAGHSRLGVLTNRPGTLSNDFFVNLLDMSTQWTKSSSADGTYEGRDRKTGALKWTASPVDLVFGSSSELRAVAEVYASDDAHEKFVRDFVQAWTKVMNLDRFDLKRS.

A signal peptide spans 1–28 (MQKKRVGKSVVAALAIIAMSAGTVAAWA). A cross-link (tryptophyl-tyrosyl-methioninium (Trp-Tyr) (with M-254)) is located at residues 107 to 228 (WHGAGTYRTY…LAATQMGLIY (122 aa)). His-108 (proton acceptor) is an active-site residue. The segment at residues 228 to 254 (YVNPEGPNGNPDPVAAAKDIRDAFGRM) is a cross-link (tryptophyl-tyrosyl-methioninium (Tyr-Met) (with W-107)). Heme b is bound at residue His-269.

It belongs to the peroxidase family. Peroxidase/catalase subfamily. As to quaternary structure, homodimer or homotetramer. Heme b is required as a cofactor. Formation of the three residue Trp-Tyr-Met cross-link is important for the catalase, but not the peroxidase activity of the enzyme.

The catalysed reaction is H2O2 + AH2 = A + 2 H2O. The enzyme catalyses 2 H2O2 = O2 + 2 H2O. In terms of biological role, bifunctional enzyme with both catalase and broad-spectrum peroxidase activity. This Burkholderia ambifaria (strain ATCC BAA-244 / DSM 16087 / CCUG 44356 / LMG 19182 / AMMD) (Burkholderia cepacia (strain AMMD)) protein is Catalase-peroxidase 2.